A 170-amino-acid chain; its full sequence is Endoribonuclease YbeY (170 aa).

3 residues coordinate Zn(2+): H118, H122, and H128.

The protein belongs to the endoribonuclease YbeY family. The cofactor is Zn(2+).

The protein localises to the cytoplasm. Single strand-specific metallo-endoribonuclease involved in late-stage 70S ribosome quality control and in maturation of the 3' terminus of the 16S rRNA. This is Endoribonuclease YbeY from Mycobacteroides abscessus (strain ATCC 19977 / DSM 44196 / CCUG 20993 / CIP 104536 / JCM 13569 / NCTC 13031 / TMC 1543 / L948) (Mycobacterium abscessus).